The primary structure comprises 325 residues: ATP phosphoribosyltransferase (325 aa).

The protein belongs to the ATP phosphoribosyltransferase family. Long subfamily. Requires Mg(2+) as cofactor.

Its subcellular location is the cytoplasm. It carries out the reaction 1-(5-phospho-beta-D-ribosyl)-ATP + diphosphate = 5-phospho-alpha-D-ribose 1-diphosphate + ATP. It participates in amino-acid biosynthesis; L-histidine biosynthesis; L-histidine from 5-phospho-alpha-D-ribose 1-diphosphate: step 1/9. With respect to regulation, feedback inhibited by histidine. Its function is as follows. Catalyzes the condensation of ATP and 5-phosphoribose 1-diphosphate to form N'-(5'-phosphoribosyl)-ATP (PR-ATP). Has a crucial role in the pathway because the rate of histidine biosynthesis seems to be controlled primarily by regulation of HisG enzymatic activity. The sequence is that of ATP phosphoribosyltransferase from Rhodopseudomonas palustris (strain BisA53).